The chain runs to 321 residues: Geranylgeranyl transferase type-2 subunit beta 1 (321 aa).

Position 2 is an N-acetylserine (Ser2). 6 PFTB repeats span residues 14–55 (ADKH…DLLD), 62–103 (EEEV…ALFD), 110–151 (IGKV…SILK), 158–199 (VEKA…AITG), 206–247 (KDSL…IMID), and 254–296 (KAKL…SLLE). Geranylgeranyl diphosphate contacts are provided by residues 184–186 (HAG) and 226–229 (RPEK). Zn(2+) contacts are provided by Asp232 and Cys234. 235 to 238 (YSWW) provides a ligand contact to geranylgeranyl diphosphate. His284 contacts Zn(2+).

This sequence belongs to the protein prenyltransferase subunit beta family. As to quaternary structure, heterotrimer composed of the alpha subunit RGTA, the beta subunit RGTB and REP; within this trimer, RGTA and RGTB form the catalytic component, while REP mediates peptide substrate binding. Zn(2+) is required as a cofactor. The cofactor is Mg(2+).

It catalyses the reaction geranylgeranyl diphosphate + L-cysteinyl-[protein] = S-geranylgeranyl-L-cysteinyl-[protein] + diphosphate. With respect to regulation, the enzymatic reaction requires the aid of the Rab escort protein REP. Catalyzes the transfer of a geranylgeranyl moiety from geranylgeranyl diphosphate to both cysteines of Rab proteins with the C-terminal sequence -CCXX, CXXX, -XCCX and -XCXC, such as RABA1A, RABA2A, RABF2A and RABG2. Involved in the geranylgeranylation of RABA2A. In vitro, can prenylate PGGTI targets with the C-terminal sequence Cys-aliphatic-aliphatic-X (CaaX) with leucine in the terminal position. Substrates with the C-terminal sequence -CSIL such as ARAC11/ROP1 or GG2/AGG2 are prenylated independently of REP and when the beta subunit is associated with the alpha subunit RGTA1. In terms of biological role, required for male fertility and root tip growth. This chain is Geranylgeranyl transferase type-2 subunit beta 1, found in Arabidopsis thaliana (Mouse-ear cress).